Here is a 140-residue protein sequence, read N- to C-terminus: L-fucose mutarotase (140 aa).

Residue histidine 22 is the Proton donor of the active site. Residues aspartate 30, arginine 107, and 129–131 contribute to the substrate site; that span reads YGN.

It belongs to the RbsD / FucU family. FucU mutarotase subfamily. As to quaternary structure, homodecamer.

It is found in the cytoplasm. The enzyme catalyses alpha-L-fucose = beta-L-fucose. The protein operates within carbohydrate metabolism; L-fucose metabolism. Involved in the anomeric conversion of L-fucose. The polypeptide is L-fucose mutarotase (Salmonella paratyphi B (strain ATCC BAA-1250 / SPB7)).